The primary structure comprises 1417 residues: DNA-directed RNA polymerase subunit beta' (1417 aa).

Zn(2+)-binding residues include C68, C70, C83, and C86. 3 residues coordinate Mg(2+): D458, D460, and D462. 4 residues coordinate Zn(2+): C811, C884, C891, and C894.

Belongs to the RNA polymerase beta' chain family. In terms of assembly, the RNAP catalytic core consists of 2 alpha, 1 beta, 1 beta' and 1 omega subunit. When a sigma factor is associated with the core the holoenzyme is formed, which can initiate transcription. The cofactor is Mg(2+). It depends on Zn(2+) as a cofactor.

It catalyses the reaction RNA(n) + a ribonucleoside 5'-triphosphate = RNA(n+1) + diphosphate. Its function is as follows. DNA-dependent RNA polymerase catalyzes the transcription of DNA into RNA using the four ribonucleoside triphosphates as substrates. This Francisella tularensis subsp. novicida (strain U112) protein is DNA-directed RNA polymerase subunit beta'.